We begin with the raw amino-acid sequence, 654 residues long: Endoplasmic reticulum chaperone BiP (654 aa).

Positions 1–18 are cleaved as a signal peptide; the sequence is MKLSLVAAMLLLLSAARA. Positions 1–80 are required for interaction with ELAPOR1; that stretch reads MKLSLVAAML…EGERLIGDAA (80 aa). Residue 36-39 participates in ATP binding; the sequence is GTTY. The residue at position 86 (Ser-86) is a Phosphoserine. Lys-96 serves as a coordination point for ATP. Residue Lys-125 is modified to N6-acetyllysine. The interval 125 to 280 is nucleotide-binding (NBD); sequence KPYIQVDIGG…KKKTGKDVRK (156 aa). Tyr-160 carries the post-translational modification 3'-nitrotyrosine. At Lys-213 the chain carries N6-acetyllysine. Residue 227 to 229 participates in ATP binding; the sequence is GGT. Lys-271 carries the post-translational modification N6-acetyllysine. 293-300 contributes to the ATP binding site; the sequence is EKAKRALS. Lys-326 is subject to N6-acetyllysine. Lys-352 is covalently cross-linked (Glycyl lysine isopeptide (Lys-Gly) (interchain with G-Cter in SUMO2)). N6-acetyllysine; alternate is present on Lys-353. A Glycyl lysine isopeptide (Lys-Gly) (interchain with G-Cter in SUMO1); alternate cross-link involves residue Lys-353. 364-367 contributes to the ATP binding site; the sequence is GSTR. The interval 409-419 is interdomain linker; it reads QDTGDLVLLDV. A substrate-binding (SBD) region spans residues 420 to 500; that stretch reads CPLTLGIETV…PRGVPQIEVT (81 aa). An N6-succinyllysine modification is found at Lys-447. Arg-492 carries the omega-N-methylarginine modification. Residue Thr-518 is modified to O-AMP-threonine; alternate. Thr-518 is modified (phosphothreonine; alternate). At Lys-585 the chain carries N6,N6,N6-trimethyllysine; by METTL21A; in vitro. Position 585 is an N6,N6-dimethyllysine; alternate (Lys-585). Lys-585 is modified (N6-methyllysine; alternate). Lys-591 bears the N6-methyllysine mark. The tract at residues 633–654 is disordered; the sequence is KLYGSAGPPPTGEEDTAEKDEL. A phosphothreonine mark is found at Thr-643 and Thr-648. The span at 644–654 shows a compositional bias: acidic residues; that stretch reads GEEDTAEKDEL. Positions 651 to 654 match the Prevents secretion from ER motif; that stretch reads KDEL.

It belongs to the heat shock protein 70 family. As to quaternary structure, monomer and homooligomer; homooligomerization via the interdomain linker inactivates the chaperone activity and acts as a storage of HSPA5/BiP molecules. Interacts with DNAJC1 (via J domain). Component of an EIF2 complex at least composed of CELF1/CUGBP1, CALR, CALR3, EIF2S1, EIF2S2, HSP90B1 and HSPA5. Part of a large chaperone multiprotein complex comprising DNAJB11, HSP90B1, HSPA5, HYOU, PDIA2, PDIA4, PDIA6, PPIB, SDF2L1, UGGT1 and very small amounts of ERP29, but not, or at very low levels, CALR nor CANX. Interacts with TMEM132A and TRIM21. May form a complex with ERLEC1, OS9, SEL1L and SYVN1. Interacts with DNAJC10. Interacts with DNAJB9/ERdj4; leading to recruit HSPA5/BiP to ERN1/IRE1. Interacts with ERN1/IRE1 (via luminal domain); the interaction takes place following interaction with DNAJB9/ERdj4 and leads to inactivate ERN1/IRE1, the interaction also competitively inhibits ERN1 interaction with MANF. Interacts directly with MANF (via SAP domain); the interaction inhibits ATP binding to HSPA5/BiP and subsequent nucleotide exchange. Interacts with EIF2AK3/PERK (via luminal domain); interaction leads to inactivate EIF2AK3/PERK. Interacts with MX1. Interacts with METTL23. Interacts with CEMIP; the interaction induces calcium leakage from the endoplasmic reticulum and cell migration. Interacts with PCSK4 form; the interaction takes place in the endoplasmic reticulum. Interacts with CIPC. Interacts with CCDC88B (via C-terminus); the interaction opposes ERN1-mediated JNK activation, protecting against apoptosis. Interacts with INPP5K; necessary for INPP5K localization at the endoplasmic reticulum. Interacts with MANF; the interaction is direct. Interacts with LOXL2; leading to activate the ERN1/IRE1-XBP1 pathway of the unfolded protein response. Interacts with CLU under stressed condition; interaction increases CLU protein stability; facilitates its retrotranslocation and redistribution to the mitochondria; cooperatively suppress stress-induced apoptosis by stabilizing mitochondrial membrane integrity. Interacts with CCDC47. Interacts with CLN3. Interacts with ELAPOR1; may regulate the function of HSPA5 in apoptosis and cell proliferation. Interacts with CASP7. Interacts with ILDR2; the interaction stabilizes ILDR2 expression. Interacts with ADAM7. In terms of assembly, (Microbial infection) Interacts with Japanese encephalitis virus envelope protein E. (Microbial infection) Interacts with R.delemar invasin CotH3 on the surface of nasal epithelial cells. Interacts with R.delemar invasin CotH2. As to quaternary structure, (Microbial infection) Interacts with Zika virus envelope protein E and non-structural protein 1 in a chaperone-client manner. In terms of processing, AMPylated by FICD. In unstressed cells, AMPylation at Thr-518 by FICD inactivates the chaperome activity: AMPylated form is locked in a relatively inert state and only weakly stimulated by J domain-containing proteins. In response to endoplasmic reticulum stress, de-AMPylation by the same protein, FICD, restores the chaperone activity.

It is found in the endoplasmic reticulum lumen. Its subcellular location is the melanosome. The protein localises to the cytoplasm. It localises to the cell surface. It carries out the reaction ATP + H2O = ADP + phosphate + H(+). The chaperone activity is regulated by ATP-induced allosteric coupling of the nucleotide-binding (NBD) and substrate-binding (SBD) domains. In the ADP-bound and nucleotide-free (apo) states, the two domains have little interaction. In contrast, in the ATP-bound state the two domains are tightly coupled, which results in drastically accelerated kinetics in both binding and release of polypeptide substrates. J domain-containing co-chaperones (DNAJB9/ERdj4 or DNAJC10/ERdj5) stimulate the ATPase activity and are required for efficient substrate recognition by HSPA5/BiP. Homooligomerization inactivates participating HSPA5/BiP protomers and probably act as reservoirs to store HSPA5/BiP molecules when they are not needed by the cell. Endoplasmic reticulum chaperone that plays a key role in protein folding and quality control in the endoplasmic reticulum lumen. Involved in the correct folding of proteins and degradation of misfolded proteins via its interaction with DNAJC10/ERdj5, probably to facilitate the release of DNAJC10/ERdj5 from its substrate. Acts as a key repressor of the EIF2AK3/PERK and ERN1/IRE1-mediated unfolded protein response (UPR). In the unstressed endoplasmic reticulum, recruited by DNAJB9/ERdj4 to the luminal region of ERN1/IRE1, leading to disrupt the dimerization of ERN1/IRE1, thereby inactivating ERN1/IRE1. Also binds and inactivates EIF2AK3/PERK in unstressed cells. Accumulation of misfolded protein in the endoplasmic reticulum causes release of HSPA5/BiP from ERN1/IRE1 and EIF2AK3/PERK, allowing their homodimerization and subsequent activation. Plays an auxiliary role in post-translational transport of small presecretory proteins across endoplasmic reticulum (ER). May function as an allosteric modulator for SEC61 channel-forming translocon complex, likely cooperating with SEC62 to enable the productive insertion of these precursors into SEC61 channel. Appears to specifically regulate translocation of precursors having inhibitory residues in their mature region that weaken channel gating. May also play a role in apoptosis and cell proliferation. In terms of biological role, (Microbial infection) Plays an important role in viral binding to the host cell membrane and entry for several flaviruses such as Dengue virus, Zika virus and Japanese encephalitis virus. Acts as a component of the cellular receptor for Dengue virus serotype 2/DENV-2 on human liver cells. Functionally, (Microbial infection) Acts as a receptor for CotH proteins expressed by fungi of the order mucorales, the causative agent of mucormycosis, which plays an important role in epithelial cell invasion by the fungi. Acts as a receptor for R.delemar CotH3 in nasal epithelial cells, which may be an early step in rhinoorbital/cerebral mucormycosis (RCM) disease progression. The chain is Endoplasmic reticulum chaperone BiP from Homo sapiens (Human).